Consider the following 231-residue polypeptide: MTLDSYDKLLGTVLQEYKILTEYKRLQSEDLGGIYVIPSHENSFVWFGVLFVRSGPYKNGVFRFTLTLPDKFPNDSAVPTVVFQSETFHPLVCPYNGTLELSEAFAKWKSGENHLWQVLKFIQYVFAHFEEYMAVAELTANNVAHELFQQSRADFLQRVEECVRLSQAKVYDPAPVQDRNYIVFEQFDGAVHGPVLESMKQGRANEVGTTPPSSGLSWVKEGVFQPLSKQG.

Residues 14–168 (LQEYKILTEY…VEECVRLSQA (155 aa)) form the UBC core domain.

This sequence belongs to the ubiquitin-conjugating enzyme family. FTS subfamily.

The sequence is that of Protein crossbronx homolog from Culex quinquefasciatus (Southern house mosquito).